The primary structure comprises 350 residues: Phosphotriesterase-related protein (350 aa).

Residues His22, His24, Glu169, His201, His230, and Asp298 each coordinate a divalent metal cation.

The protein belongs to the metallo-dependent hydrolases superfamily. Phosphotriesterase family. The cofactor is a divalent metal cation.

In Drosophila willistoni (Fruit fly), this protein is Phosphotriesterase-related protein.